A 165-amino-acid chain; its full sequence is MSRIALYPGSFDPVTNGHLDVVRHAVALCDRLVVAIGIHPGKKPLFTTEERLMMVKSVFEPVANAAGCTFDCTTYDNLTVTSAQQVGATLMIRGLRDGTDLDYEMQIAGMNETMAPGIHTVFVPASVGVRPITATLVRQIAAMGGDVSAFVPPDVAASLKSKFAG.

Ser-10 lines the substrate pocket. ATP is bound by residues 10-11 and His-18; that span reads SF. Lys-42, Thr-79, and Arg-93 together coordinate substrate. ATP contacts are provided by residues 94–96, Glu-104, and 129–135; these read GLR and VRPITAT.

This sequence belongs to the bacterial CoaD family. In terms of assembly, homohexamer. Requires Mg(2+) as cofactor.

The protein localises to the cytoplasm. It carries out the reaction (R)-4'-phosphopantetheine + ATP + H(+) = 3'-dephospho-CoA + diphosphate. It participates in cofactor biosynthesis; coenzyme A biosynthesis; CoA from (R)-pantothenate: step 4/5. Functionally, reversibly transfers an adenylyl group from ATP to 4'-phosphopantetheine, yielding dephospho-CoA (dPCoA) and pyrophosphate. The sequence is that of Phosphopantetheine adenylyltransferase from Rhodopseudomonas palustris (strain BisB5).